Reading from the N-terminus, the 338-residue chain is Secretory carrier-associated membrane protein 1 (338 aa).

Residues 1–64 (MSDFDSNPFA…NVPNTQPAIM (64 aa)) are disordered. N-acetylserine is present on serine 2. The residue at position 2 (serine 2) is a Phosphoserine. Over 2-155 (SDFDSNPFAD…QKTVKLMYYL (154 aa)) the chain is Cytoplasmic. Position 45 is a phosphothreonine (threonine 45). The chain crosses the membrane as a helical span at residues 156–176 (WMFHAVTLFLNIFGCLAWFCV). The Lumenal segment spans residues 177–181 (DSARA). A helical membrane pass occupies residues 182 to 202 (VDFGLSILWFLLFTPCSFVCW). At 203 to 218 (YRPLYGAFRSDSSFRF) the chain is on the cytoplasmic side. Residues 219–239 (FVFFFVYICQFAVHVLQAAGF) form a helical membrane-spanning segment. The Lumenal segment spans residues 240-261 (HNWGNCGWISSLTGLNQNIPVG). A helical transmembrane segment spans residues 262 to 282 (IMMIIIAALFTASAVISLVMF). The Cytoplasmic segment spans residues 283–338 (KKVHGLYRTTGASFEKAQQEFATGVMSNKTVQTAAANAASTAASSAAQNAFKGNQI).

This sequence belongs to the SCAMP family. As to quaternary structure, interacts with SYNRG and ITSN1. Interacts with SLC9A7. As to expression, widely expressed, with highest expression in brain.

It is found in the golgi apparatus. The protein localises to the trans-Golgi network membrane. The protein resides in the recycling endosome membrane. Its function is as follows. Functions in post-Golgi recycling pathways. Acts as a recycling carrier to the cell surface. This chain is Secretory carrier-associated membrane protein 1 (SCAMP1), found in Homo sapiens (Human).